Here is a 422-residue protein sequence, read N- to C-terminus: 2-oxoglutarate and iron-dependent oxygenase JMJD4 (422 aa).

One can recognise a JmjC domain in the interval 139 to 298 (QRNFPEHNIY…IMWQFLQDEL (160 aa)). His186, Asp188, and His266 together coordinate Fe cation.

The protein belongs to the JMJD6 family. It depends on Fe(2+) as a cofactor.

It is found in the cytoplasm. It catalyses the reaction L-lysyl-[protein] + 2-oxoglutarate + O2 = 4-hydroxy-L-lysyl-[protein] + succinate + CO2. Functionally, catalyzes the 2-oxoglutarate and iron-dependent C4-lysyl hydroxylation of ETF1 at 'Lys-63' thereby promoting the translational termination efficiency of ETF1. The protein is 2-oxoglutarate and iron-dependent oxygenase JMJD4 (jmjd4) of Danio rerio (Zebrafish).